We begin with the raw amino-acid sequence, 495 residues long: Steroid 21-hydroxylase (495 aa).

Residues arginine 92 and lysine 121 each contribute to the heme b site. Residue arginine 234 participates in 17alpha-hydroxyprogesterone binding. Arginine 234 lines the progesterone pocket. Positions 366, 427, and 429 each coordinate heme b.

It belongs to the cytochrome P450 family. Heme b is required as a cofactor.

The protein resides in the endoplasmic reticulum membrane. It is found in the microsome membrane. It catalyses the reaction progesterone + reduced [NADPH--hemoprotein reductase] + O2 = 21-hydroxyprogesterone + oxidized [NADPH--hemoprotein reductase] + H2O + H(+). The catalysed reaction is 17alpha-hydroxyprogesterone + reduced [NADPH--hemoprotein reductase] + O2 = 11-deoxycortisol + oxidized [NADPH--hemoprotein reductase] + H2O + H(+). In terms of biological role, a cytochrome P450 monooxygenase that plays a major role in adrenal steroidogenesis. Catalyzes the hydroxylation at C-21 of progesterone and 17alpha-hydroxyprogesterone to respectively form 11-deoxycorticosterone and 11-deoxycortisol, intermediate metabolites in the biosynthetic pathway of mineralocorticoids and glucocorticoids. Mechanistically, uses molecular oxygen inserting one oxygen atom into a substrate, and reducing the second into a water molecule, with two electrons provided by NADPH via cytochrome P450 reductase (CPR; NADPH-ferrihemoprotein reductase). This is Steroid 21-hydroxylase (CYP21A2) from Homo sapiens (Human).